The sequence spans 172 residues: Ribosome maturation factor RimM (172 aa).

A PRC barrel domain is found at 96-168; sequence DGEFYYHEII…RVDVELLEGL (73 aa).

Belongs to the RimM family. In terms of assembly, binds ribosomal protein uS19.

Its subcellular location is the cytoplasm. An accessory protein needed during the final step in the assembly of 30S ribosomal subunit, possibly for assembly of the head region. Essential for efficient processing of 16S rRNA. May be needed both before and after RbfA during the maturation of 16S rRNA. It has affinity for free ribosomal 30S subunits but not for 70S ribosomes. The chain is Ribosome maturation factor RimM from Streptococcus suis (strain 05ZYH33).